The sequence spans 98 residues: Feather beta keratin (98 aa).

Position 2 is an N-acetylserine (S2).

It belongs to the avian keratin family. As to quaternary structure, the avian keratins (F-ker, S-ker, C-ker and B-ker) are a complex mixture of very similar polypeptides.

The chain is Feather beta keratin from Cathartes aura (Turkey vulture).